Consider the following 89-residue polypeptide: Small ribosomal subunit protein uS17 (89 aa).

This sequence belongs to the universal ribosomal protein uS17 family. In terms of assembly, part of the 30S ribosomal subunit.

Functionally, one of the primary rRNA binding proteins, it binds specifically to the 5'-end of 16S ribosomal RNA. The polypeptide is Small ribosomal subunit protein uS17 (Leptospira borgpetersenii serovar Hardjo-bovis (strain JB197)).